The following is a 430-amino-acid chain: Glutamate-1-semialdehyde 2,1-aminomutase 2 (430 aa).

Position 268 is an N6-(pyridoxal phosphate)lysine (lysine 268).

This sequence belongs to the class-III pyridoxal-phosphate-dependent aminotransferase family. HemL subfamily. Homodimer. The cofactor is pyridoxal 5'-phosphate.

It is found in the cytoplasm. The enzyme catalyses (S)-4-amino-5-oxopentanoate = 5-aminolevulinate. The protein operates within porphyrin-containing compound metabolism; protoporphyrin-IX biosynthesis; 5-aminolevulinate from L-glutamyl-tRNA(Glu): step 2/2. The sequence is that of Glutamate-1-semialdehyde 2,1-aminomutase 2 from Shouchella clausii (strain KSM-K16) (Alkalihalobacillus clausii).